Here is a 68-residue protein sequence, read N- to C-terminus: Large ribosomal subunit protein bL35 (68 aa).

It belongs to the bacterial ribosomal protein bL35 family.

This Wolbachia pipientis wMel protein is Large ribosomal subunit protein bL35.